The sequence spans 256 residues: Type III pantothenate kinase (256 aa).

ATP is bound at residue 6–13 (DVGNTNMV). Substrate contacts are provided by residues Tyr100 and 107–110 (GADR). Asp109 functions as the Proton acceptor in the catalytic mechanism. Residue Asp129 participates in K(+) binding. Position 132 (Thr132) interacts with ATP. Thr184 contacts substrate.

This sequence belongs to the type III pantothenate kinase family. Homodimer. NH4(+) is required as a cofactor. K(+) serves as cofactor.

It localises to the cytoplasm. The catalysed reaction is (R)-pantothenate + ATP = (R)-4'-phosphopantothenate + ADP + H(+). The protein operates within cofactor biosynthesis; coenzyme A biosynthesis; CoA from (R)-pantothenate: step 1/5. Its function is as follows. Catalyzes the phosphorylation of pantothenate (Pan), the first step in CoA biosynthesis. In Clostridioides difficile (strain 630) (Peptoclostridium difficile), this protein is Type III pantothenate kinase.